The primary structure comprises 214 residues: Adenylate kinase (214 aa).

10 to 15 (GAGKGT) contacts ATP. The tract at residues 30-59 (STGDMFRDHKARGTEIGKQVQAIMDGGGLV) is NMP. Residues Thr31, Arg36, 57–59 (GLV), 85–88 (GYPR), and Gln92 each bind AMP. The tract at residues 126–163 (GRRSCPRCGAVYHVSQNPPRRAGYCDRDDAELVQREDD) is LID. Residue Arg127 participates in ATP binding. Residues Cys130 and Cys133 each coordinate Zn(2+). 136 to 137 (VY) lines the ATP pocket. Zn(2+)-binding residues include Cys150 and Asp153. The AMP site is built by Arg160 and Arg171. Gly199 serves as a coordination point for ATP.

The protein belongs to the adenylate kinase family. As to quaternary structure, monomer.

Its subcellular location is the cytoplasm. The enzyme catalyses AMP + ATP = 2 ADP. The protein operates within purine metabolism; AMP biosynthesis via salvage pathway; AMP from ADP: step 1/1. Catalyzes the reversible transfer of the terminal phosphate group between ATP and AMP. Plays an important role in cellular energy homeostasis and in adenine nucleotide metabolism. This chain is Adenylate kinase, found in Anaeromyxobacter dehalogenans (strain 2CP-C).